A 452-amino-acid polypeptide reads, in one-letter code: UDP-N-acetylmuramoylalanine--D-glutamate ligase (452 aa).

119 to 125 (GSNGKTT) is a binding site for ATP.

The protein belongs to the MurCDEF family.

Its subcellular location is the cytoplasm. The enzyme catalyses UDP-N-acetyl-alpha-D-muramoyl-L-alanine + D-glutamate + ATP = UDP-N-acetyl-alpha-D-muramoyl-L-alanyl-D-glutamate + ADP + phosphate + H(+). The protein operates within cell wall biogenesis; peptidoglycan biosynthesis. Functionally, cell wall formation. Catalyzes the addition of glutamate to the nucleotide precursor UDP-N-acetylmuramoyl-L-alanine (UMA). The sequence is that of UDP-N-acetylmuramoylalanine--D-glutamate ligase from Streptococcus pyogenes serotype M5 (strain Manfredo).